The primary structure comprises 306 residues: Bifunctional protein FolD 1 (306 aa).

Residues 170–172, Thr199, and Val240 contribute to the NADP(+) site; that span reads GRG. The disordered stretch occupies residues 285–306; that stretch reads ARRTRSSRTPVRLPDSGAPAGR.

The protein belongs to the tetrahydrofolate dehydrogenase/cyclohydrolase family. In terms of assembly, homodimer.

It catalyses the reaction (6R)-5,10-methylene-5,6,7,8-tetrahydrofolate + NADP(+) = (6R)-5,10-methenyltetrahydrofolate + NADPH. The enzyme catalyses (6R)-5,10-methenyltetrahydrofolate + H2O = (6R)-10-formyltetrahydrofolate + H(+). It participates in one-carbon metabolism; tetrahydrofolate interconversion. In terms of biological role, catalyzes the oxidation of 5,10-methylenetetrahydrofolate to 5,10-methenyltetrahydrofolate and then the hydrolysis of 5,10-methenyltetrahydrofolate to 10-formyltetrahydrofolate. This Salinispora tropica (strain ATCC BAA-916 / DSM 44818 / JCM 13857 / NBRC 105044 / CNB-440) protein is Bifunctional protein FolD 1.